The chain runs to 478 residues: Probable cytosolic Fe-S cluster assembly factor AGAP009023 (478 aa).

Residues Cys-23, Cys-69, Cys-72, Cys-75, Cys-189, Cys-245, Cys-396, and Cys-400 each contribute to the [4Fe-4S] cluster site.

It belongs to the NARF family.

Functionally, component of the cytosolic iron-sulfur (Fe/S) protein assembly machinery. Required for maturation of extramitochondrial Fe/S proteins. The protein is Probable cytosolic Fe-S cluster assembly factor AGAP009023 of Anopheles gambiae (African malaria mosquito).